The chain runs to 85 residues: UPF0297 protein CPR_1749 (85 aa).

Belongs to the UPF0297 family.

The polypeptide is UPF0297 protein CPR_1749 (Clostridium perfringens (strain SM101 / Type A)).